The following is a 231-amino-acid chain: MEGCVSNLMVCNLAYNGKLDELKESILADKSLATRTDQDSRTALHWACSAGHTEIVEFLLQLGVPVNEKDDAGWSPLHIAASAGRDEIVKALLIKGAQVNAVNQNGCTALHYAASKNRHEIAVMLLEGGANPDAKNHYDATAMHRAAAKGNLKMVHILLFYKASTNIQDTEGNTPLHLACDEERVEEAKLLVTQGASIYIENKEEKTPLQVAKGGLGLILKRIAESEEASM.

ANK repeat units follow at residues 3–36 (GCVSNLMVCNLAYNGKLDELKESILADKSLATRT), 37–69 (DQDSRTALHWACSAGHTEIVEFLLQLGVPVNEK), 70–102 (DDAGWSPLHIAASAGRDEIVKALLIKGAQVNAV), 103–135 (NQNGCTALHYAASKNRHEIAVMLLEGGANPDAK), 136–168 (NHYDATAMHRAAAKGNLKMVHILLFYKASTNIQ), 169–201 (DTEGNTPLHLACDEERVEEAKLLVTQGASIYIE), and 202–226 (NKEEKTPLQVAKGGLGLILKRIAES).

In terms of assembly, part of transient complex containing PSMD10, PSMC4, PSMC5 and PAAF1 formed during the assembly of the 26S proteasome. Stays associated throughout the assembly of the PA700/19S RC and is released upon association with the 20S core. Interacts with PSMC4. Interacts with RB1. Interacts with CDK4. Interacts with MDM2. Interacts with RELA. Associates with a CDK4:CCND2 serine/threonine kinase complex. Interacts with ARHGDIA and increases the interaction between ARHGDIA and RHOA, hence promotes ARHGDIA inactivation of RHOA and ROCK.

It localises to the cytoplasm. Its subcellular location is the nucleus. Acts as a chaperone during the assembly of the 26S proteasome, specifically of the PA700/19S regulatory complex (RC). In the initial step of the base subcomplex assembly is part of an intermediate PSMD10:PSMC4:PSMC5:PAAF1 module which probably assembles with a PSMD5:PSMC2:PSMC1:PSMD2 module. Independently of the proteasome, regulates EGF-induced AKT activation through inhibition of the RHOA/ROCK/PTEN pathway, leading to prolonged AKT activation. Plays an important role in RAS-induced tumorigenesis. Functionally, acts as an oncoprotein by being involved in negative regulation of tumor suppressors RB1 and p53/TP53. Overexpression is leading to phosphorylation of RB1 and proteasomal degradation of RB1. Regulates CDK4-mediated phosphorylation of RB1 by competing with CDKN2A for binding with CDK4. Facilitates binding of MDM2 to p53/TP53 and the mono- and polyubiquitination of p53/TP53 by MDM2 suggesting a function in targeting the TP53:MDM2 complex to the 26S proteasome. Involved in p53-independent apoptosis. Involved in regulation of NF-kappa-B by retaining it in the cytoplasm. Binds to the NF-kappa-B component RELA and accelerates its XPO1/CRM1-mediated nuclear export. The chain is 26S proteasome non-ATPase regulatory subunit 10 (Psmd10) from Rattus norvegicus (Rat).